The chain runs to 454 residues: Mitochondrial dynamics protein MID49 (454 aa).

The Mitochondrial intermembrane portion of the chain corresponds to Met1–Asp22. At Ser13 the chain carries Phosphoserine. The helical transmembrane segment at Phe23–Ala43 threads the bilayer. The Cytoplasmic portion of the chain corresponds to Thr44–Leu454. The disordered stretch occupies residues Ala76–Ser119. The segment covering Ala88 to Pro103 has biased composition (low complexity).

The protein belongs to the MID49/MID51 family. In terms of assembly, interacts with DNM1L. As to expression, expressed in all tissues tested with highest expression in heart and skeletal muscle.

It is found in the mitochondrion outer membrane. Mitochondrial outer membrane protein involved in the regulation of mitochondrial organization. It is required for mitochondrial fission and promotes the recruitment and association of the fission mediator dynamin-related protein 1 (DNM1L) to the mitochondrial surface independently of the mitochondrial fission FIS1 and MFF proteins. Regulates DNM1L GTPase activity. The polypeptide is Mitochondrial dynamics protein MID49 (MIEF2) (Homo sapiens (Human)).